Consider the following 659-residue polypeptide: L-type lectin-domain containing receptor kinase V.7 (659 aa).

The first 25 residues, 1–25 (MSHKVLQIVLVLLLTLFSSTHNSNG), serve as a signal peptide directing secretion. Positions 22-244 (NSNGNFLMEE…GALYYVMQFS (223 aa)) are legume-lectin like. Residues 26-275 (NFLMEEAAAA…PKKSYDRTRR (250 aa)) lie on the Extracellular side of the membrane. N-linked (GlcNAc...) asparagine glycosylation is found at asparagine 45, asparagine 64, asparagine 110, and asparagine 192. The helical transmembrane segment at 276 to 296 (ILAVCLTLAVFTALVASGIGF) threads the bilayer. Topologically, residues 297 to 659 (VFYVRHKKVK…LTNSFVSHGR (363 aa)) are cytoplasmic. A Protein kinase domain is found at 333-595 (FKEKQLLGKG…GLLCAHHTEL (263 aa)). ATP-binding positions include 339–347 (LGKGGFGQV) and lysine 362. Catalysis depends on aspartate 462, which acts as the Proton acceptor.

The protein in the C-terminal section; belongs to the protein kinase superfamily. Ser/Thr protein kinase family. It in the N-terminal section; belongs to the leguminous lectin family.

It localises to the cell membrane. The enzyme catalyses L-seryl-[protein] + ATP = O-phospho-L-seryl-[protein] + ADP + H(+). It carries out the reaction L-threonyl-[protein] + ATP = O-phospho-L-threonyl-[protein] + ADP + H(+). In terms of biological role, involved in resistance response to the pathogenic oomycetes Phytophthora infestans and Phytophthora capsici and to the pathogenic bacteria Pseudomonas syringae. This Arabidopsis thaliana (Mouse-ear cress) protein is L-type lectin-domain containing receptor kinase V.7.